The following is a 104-amino-acid chain: MSRVCELTNRKKSFGNKVSHSNRKTKRTFLLNLHKVTLTSDILNKKFRFRVATRTLRTIDYKGDLDAFLLNTRTIKLSEKAQKIKRRLKKVLVKQEVELAVSDA.

This sequence belongs to the bacterial ribosomal protein bL28 family.

In Wolbachia pipientis wMel, this protein is Large ribosomal subunit protein bL28.